The sequence spans 280 residues: MKLAAMIKKMCPSDSELSIPAKNCYRMVILGSSKVGKTAIVSRFLTGRFEDAYTPTIEDFHRKFYSIRGEVYQLDILDTSGNHPFPAMRRLSILTGDVFILVFSLDNRDSFEEVQRLKQQILDTKSCLKNKTKENVDVPLVICGNKGDRDFYREVEQREIEQLVGDDPQRCAYFEISAKKNSSLDQMFRALFAMAKLPSEMSPDLHRKVSVQYCDVLHKKALRNKKLLRAGSGGGGDHGDAFGILAPFARRPSVHSDLMYIREKTSVSSQAKDKERCVIS.

An S-nitrosocysteine modification is found at cysteine 11. 31-38 (GSSKVGKT) is a GTP binding site. The short motif at 53 to 61 (YTPTIEDFH) is the Effector region element. GTP contacts are provided by residues 78–82 (DTSGN) and 145–148 (NKGD). A Cysteine methyl ester modification is found at cysteine 277. The S-farnesyl cysteine moiety is linked to residue cysteine 277. Positions 278–280 (VIS) are cleaved as a propeptide — removed in mature form.

This sequence belongs to the small GTPase superfamily. RasD family. As to quaternary structure, forms a ternary complex with CAPON and NOS1. Component of a complex, at least composed of APBB1, RASD1/DEXRAS1 and APP. Interacts with APBB1/FE65. Forms. S-nitrosylation stimulates guanine-nucleotide exchange activity. As to expression, prominently found in brain at both mRNA and protein levels. Moderate expression in testis and lung. Slightly expressed in heart, spleen, skeletal muscle, liver and kidney.

Its subcellular location is the cell membrane. It is found in the cytoplasm. The protein localises to the perinuclear region. It localises to the nucleus. Small GTPase. Negatively regulates the transcription regulation activity of the APBB1/FE65-APP complex via its interaction with APBB1/FE65. In Rattus norvegicus (Rat), this protein is Dexamethasone-induced Ras-related protein 1 (Rasd1).